We begin with the raw amino-acid sequence, 231 residues long: uncharacterized protein (231 aa).

5 consecutive transmembrane segments (helical) span residues 36–56 (SLLAATVGAYVGIFALASFFI), 58–78 (SQVTFWILFAVEIGLLFALQW), 83–103 (APLNLVLLFGFTFCSGLTLTP), 143–163 (FTVMGKALFIVLIVIVAASLL), and 170–190 (SIVNLAISAVAAILFSFYILY).

The protein belongs to the BI1 family.

The protein resides in the cell membrane. This is an uncharacterized protein from Campylobacter jejuni subsp. jejuni serotype O:2 (strain ATCC 700819 / NCTC 11168).